An 847-amino-acid polypeptide reads, in one-letter code: Leucine--tRNA ligase (847 aa).

The 'HIGH' region motif lies at 41 to 51 (PYPSGRIHMGH). Residues 619–623 (KMSKS) carry the 'KMSKS' region motif. Lys622 provides a ligand contact to ATP.

Belongs to the class-I aminoacyl-tRNA synthetase family.

The protein localises to the cytoplasm. The catalysed reaction is tRNA(Leu) + L-leucine + ATP = L-leucyl-tRNA(Leu) + AMP + diphosphate. This is Leucine--tRNA ligase from Cereibacter sphaeroides (strain ATCC 17023 / DSM 158 / JCM 6121 / CCUG 31486 / LMG 2827 / NBRC 12203 / NCIMB 8253 / ATH 2.4.1.) (Rhodobacter sphaeroides).